Here is a 617-residue protein sequence, read N- to C-terminus: Vitamin B12 transporter BtuB (617 aa).

Residues 1 to 22 form the signal peptide; the sequence is MRKTFLAITCASLLSPTFYSQA. The short motif at 29–36 is the TonB box element; sequence ETVVVTAN. In terms of domain architecture, TBDR plug spans 40 to 154; that stretch reads QIDGAVLAQT…ISGVINIITR (115 aa). The 459-residue stretch at 159 to 617 folds into the TBDR beta-barrel domain; sequence DDSGRVSAGY…QYFVSADYRF (459 aa). The TonB C-terminal box motif lies at 600 to 617; sequence VGYVTPGRQYFVSADYRF.

The protein belongs to the TonB-dependent receptor family. BtuB (TC 1.B.14.3.1) subfamily.

It is found in the cell outer membrane. Its function is as follows. Involved in the active translocation of vitamin B12 (cyanocobalamin) across the outer membrane to the periplasmic space. It derives its energy for transport by interacting with the trans-periplasmic membrane protein TonB. The polypeptide is Vitamin B12 transporter BtuB (Vibrio campbellii (strain ATCC BAA-1116)).